The following is a 260-amino-acid chain: Na(+)-translocating NADH-quinone reductase subunit C (260 aa).

A helical transmembrane segment spans residues 12–32 (LLVIILLSLACSIIVAGSAVL). The residue at position 226 (Thr226) is an FMN phosphoryl threonine.

Belongs to the NqrC family. As to quaternary structure, composed of six subunits; NqrA, NqrB, NqrC, NqrD, NqrE and NqrF. It depends on FMN as a cofactor.

The protein localises to the cell inner membrane. The catalysed reaction is a ubiquinone + n Na(+)(in) + NADH + H(+) = a ubiquinol + n Na(+)(out) + NAD(+). Functionally, NQR complex catalyzes the reduction of ubiquinone-1 to ubiquinol by two successive reactions, coupled with the transport of Na(+) ions from the cytoplasm to the periplasm. NqrA to NqrE are probably involved in the second step, the conversion of ubisemiquinone to ubiquinol. The protein is Na(+)-translocating NADH-quinone reductase subunit C of Pasteurella multocida (strain Pm70).